The chain runs to 741 residues: Penicillin-binding protein 1B (741 aa).

Residues Met1–Phe12 are Cytoplasmic-facing. A helical; Signal-anchor for type II membrane protein transmembrane segment spans residues Leu13 to Phe33. Residues Lys34 to Thr741 lie on the Extracellular side of the membrane. A transglycosylase region spans residues Leu139–Val311. The Proton donor; for transglycosylase activity role is filled by Glu177. The transpeptidase stretch occupies residues Glu395–Asn687. The Acyl-ester intermediate; for transpeptidase activity role is filled by Ser454.

In the N-terminal section; belongs to the glycosyltransferase 51 family. This sequence in the C-terminal section; belongs to the transpeptidase family.

The protein resides in the cell membrane. The catalysed reaction is [GlcNAc-(1-&gt;4)-Mur2Ac(oyl-L-Ala-gamma-D-Glu-L-Lys-D-Ala-D-Ala)](n)-di-trans,octa-cis-undecaprenyl diphosphate + beta-D-GlcNAc-(1-&gt;4)-Mur2Ac(oyl-L-Ala-gamma-D-Glu-L-Lys-D-Ala-D-Ala)-di-trans,octa-cis-undecaprenyl diphosphate = [GlcNAc-(1-&gt;4)-Mur2Ac(oyl-L-Ala-gamma-D-Glu-L-Lys-D-Ala-D-Ala)](n+1)-di-trans,octa-cis-undecaprenyl diphosphate + di-trans,octa-cis-undecaprenyl diphosphate + H(+). It carries out the reaction Preferential cleavage: (Ac)2-L-Lys-D-Ala-|-D-Ala. Also transpeptidation of peptidyl-alanyl moieties that are N-acyl substituents of D-alanine.. It participates in cell wall biogenesis; peptidoglycan biosynthesis. In terms of biological role, cell wall formation. Synthesis of cross-linked peptidoglycan from the lipid intermediates. The enzyme has a penicillin-insensitive transglycosylase N-terminal domain (formation of linear glycan strands) and a penicillin-sensitive transpeptidase C-terminal domain (cross-linking of the peptide subunits). This chain is Penicillin-binding protein 1B (mrcB), found in Buchnera aphidicola subsp. Baizongia pistaciae (strain Bp).